Here is a 218-residue protein sequence, read N- to C-terminus: Probable cutinase 3 (218 aa).

The signal sequence occupies residues Met-1 to Ala-17. Cystine bridges form between Cys-41–Cys-120 and Cys-67–Cys-81. Ser-131 (nucleophile) is an active-site residue. A disulfide bond links Cys-182 and Cys-189. Asp-186 is a catalytic residue. The active-site Proton donor/acceptor is His-199.

The protein belongs to the cutinase family.

It is found in the secreted. It catalyses the reaction cutin + H2O = cutin monomers.. Its function is as follows. Catalyzes the hydrolysis of complex carboxylic polyesters found in the cell wall of plants. Degrades cutin, a macromolecule that forms the structure of the plant cuticle. This chain is Probable cutinase 3, found in Aspergillus terreus (strain NIH 2624 / FGSC A1156).